Here is a 271-residue protein sequence, read N- to C-terminus: Ribosomal RNA small subunit methyltransferase A (271 aa).

Positions 11, 13, 38, 59, 84, and 109 each coordinate S-adenosyl-L-methionine.

It belongs to the class I-like SAM-binding methyltransferase superfamily. rRNA adenine N(6)-methyltransferase family. RsmA subfamily.

The protein resides in the cytoplasm. The enzyme catalyses adenosine(1518)/adenosine(1519) in 16S rRNA + 4 S-adenosyl-L-methionine = N(6)-dimethyladenosine(1518)/N(6)-dimethyladenosine(1519) in 16S rRNA + 4 S-adenosyl-L-homocysteine + 4 H(+). Specifically dimethylates two adjacent adenosines (A1518 and A1519) in the loop of a conserved hairpin near the 3'-end of 16S rRNA in the 30S particle. May play a critical role in biogenesis of 30S subunits. The protein is Ribosomal RNA small subunit methyltransferase A of Trichormus variabilis (strain ATCC 29413 / PCC 7937) (Anabaena variabilis).